Consider the following 158-residue polypeptide: Transcription factor HY5 (158 aa).

The span at 1 to 25 (MQEQATSSIAASSLPSSSERSSSSA) shows a compositional bias: low complexity. Residues 1 to 105 (MQEQATSSIA…NRVSAQQARE (105 aa)) form a disordered region. Positions 26–44 (LHHELKEGMESDDEIRRVP) are enriched in basic and acidic residues. Residues 35 to 46 (ESDDEIRRVPEM) form an interaction with COP1 region. The segment covering 47 to 58 (GGEATGTTSASG) has biased composition (low complexity). Positions 86 to 149 (ENKRLKRLLR…QMLRHILKNT (64 aa)) constitute a bZIP domain. A basic motif region spans residues 88–108 (KRLKRLLRNRVSAQQARERKK). Residues 114 to 142 (LEARVKELETKNAELEERLSTLQNENQML) are leucine-zipper.

The protein belongs to the bZIP family. Interacts with COP1. In terms of processing, ubiquitinated by COP1. Ubiquitination takes place in darkness and leads to its subsequent degradation, thereby preventing to activate photomorphogenesis signals.

It localises to the nucleus. Transcription factor that promotes photomorphogenesis in the light and positively regulates fruit pigmentation and fruit nutritional quality. Probably acts downstream of the light receptor network and directly affects transcription of light-induced genes. The protein is Transcription factor HY5 (HY5) of Solanum lycopersicum (Tomato).